The sequence spans 602 residues: Cholinesterase (602 aa).

A signal peptide spans 1–28 (MQSKGTIISIQFLLRFLLLWVLIGKSHT). An N-linked (GlcNAc...) asparagine glycan is attached at N85. A disulfide bond links C93 and C120. An N-linked (GlcNAc...) asparagine glycan is attached at N134. Residue 144–145 (GG) participates in substrate binding. Catalysis depends on S226, which acts as the Acyl-ester intermediate. S226 is subject to Phosphoserine. N-linked (GlcNAc...) asparagine glycans are attached at residues N269 and N284. A disulfide bridge links C280 with C291. E353 acts as the Charge relay system in catalysis. A glycan (N-linked (GlcNAc...) asparagine) is linked at N369. An intrachain disulfide couples C428 to C547. The Charge relay system role is filled by H466. Residues N483, N509, N513, and N514 are each glycosylated (N-linked (GlcNAc...) asparagine).

It belongs to the type-B carboxylesterase/lipase family. In terms of assembly, homotetramer; disulfide-linked. Dimer of dimers.

The protein resides in the secreted. The catalysed reaction is an acylcholine + H2O = a carboxylate + choline + H(+). Its function is as follows. Esterase with broad substrate specificity. Contributes to the inactivation of the neurotransmitter acetylcholine. Can degrade neurotoxic organophosphate esters. This is Cholinesterase (BCHE) from Panthera tigris tigris (Bengal tiger).